The primary structure comprises 405 residues: Phosphoglycerate kinase (405 aa).

Residues 21 to 23 (DFN), arginine 38, 59 to 62 (HQSR), arginine 116, and arginine 156 each bind substrate. ATP contacts are provided by residues glutamate 330 and 355 to 358 (GGHT).

The protein belongs to the phosphoglycerate kinase family. As to quaternary structure, monomer.

The protein resides in the cytoplasm. It catalyses the reaction (2R)-3-phosphoglycerate + ATP = (2R)-3-phospho-glyceroyl phosphate + ADP. The protein operates within carbohydrate degradation; glycolysis; pyruvate from D-glyceraldehyde 3-phosphate: step 2/5. The sequence is that of Phosphoglycerate kinase from Methanocorpusculum labreanum (strain ATCC 43576 / DSM 4855 / Z).